A 439-amino-acid chain; its full sequence is Lipid-A-disaccharide synthase (439 aa).

Belongs to the LpxB family.

The catalysed reaction is a lipid X + a UDP-2-N,3-O-bis[(3R)-3-hydroxyacyl]-alpha-D-glucosamine = a lipid A disaccharide + UDP + H(+). It participates in bacterial outer membrane biogenesis; LPS lipid A biosynthesis. In terms of biological role, condensation of UDP-2,3-diacylglucosamine and 2,3-diacylglucosamine-1-phosphate to form lipid A disaccharide, a precursor of lipid A, a phosphorylated glycolipid that anchors the lipopolysaccharide to the outer membrane of the cell. The polypeptide is Lipid-A-disaccharide synthase (Xanthomonas axonopodis pv. citri (strain 306)).